Here is a 188-residue protein sequence, read N- to C-terminus: MAGDLEGGKSLSGLLSGLAQNAFHGHSGVTEELLHSQLYPEVPPEEFRPFLAKMRGLLKSIASADMDFNQLEAFLTAQTKKQGGITSEQAAVISKFWKSHKIKIRESLMKQSRWDNGLRGLSWRVDGKSQSRHSTQIHSPVAIIELEFGKNGQESEFLCLEFDEVKVKQILKKLSEVEESINRLMQAA.

Residues 1–122 (MAGDLEGGKS…RWDNGLRGLS (122 aa)) form a sufficient for interaction with SLC12A2 region. The Cu cation site is built by His-100, Met-109, and His-133. In terms of domain architecture, COMM spans 117-185 (GLRGLSWRVD…EVEESINRLM (69 aa)). The interval 124-188 (RVDGKSQSRH…ESINRLMQAA (65 aa)) is required for binding to PtdIns(4,5)P2.

This sequence belongs to the COMM domain-containing protein 1 family. Component of the commander complex consisting of the CCC subcomplex and the retriever subcomplex. Component of the CCC (COMMD/CCDC22/CCDC93) subcomplex consisting of COMMD1, COMMD2, COMMD3, COMMD4, COMMD5, COMMD6, COMMD7, COMMD8, COMMD9, COMMD10, CCDC22 and CCDC93; within the complex forms a heterodimer with COMMD6. Interacts with VPS35L; the interaction associates the CCC complex with the retriever complex. Identified in a complex with an E3 ubiquitin ligase complex composed of TCEB1/elongin C, CUL2, SOCS1 and RBX1; in the complex interacts directly with SOCS1 and CUL2. Identified in a complex with NF-kappa-B. Interacts directly with SLC12A2. Interacts directly with ATP7B (via the N-terminal region). Interacts with ATP7A. Interacts with FAM107A; this interaction stabilizes COMMD1 in the nucleus. Interacts with CCS, CDKN2A, RELA, REL, RELB, NFKB1/p105, NFKB2/p100, NFKBIB, SCNN1D, SCNN1B, CFTR, CLU, SGK1, AKT1, CUL1, CUL2, CUL3, CUL4A, CUL4B, CUL5, CUL7, HIF1A. Post-translationally, ubiquitinated; undergoes both 'Lys-63'- and 'Lys-48'-linked polyubiquitination. Ubiquitinated by XIAP, leading to its proteasomal degradation.

The protein localises to the nucleus. The protein resides in the cytoplasm. It is found in the endosome membrane. Its subcellular location is the cytoplasmic vesicle. It localises to the early endosome. The protein localises to the recycling endosome. Its function is as follows. Scaffold protein in the commander complex that is essential for endosomal recycling of transmembrane cargos; the commander complex is composed of the CCC subcomplex and the retriever subcomplex. Can modulate activity of cullin-RING E3 ubiquitin ligase (CRL) complexes by displacing CAND1; in vitro promotes CRL E3 activity and dissociates CAND1 from CUL1 and CUL2. Promotes ubiquitination of NF-kappa-B subunit RELA and its subsequent proteasomal degradation. Down-regulates NF-kappa-B activity. Involved in the regulation of membrane expression and ubiquitination of SLC12A2. Modulates Na(+) transport in epithelial cells by regulation of apical cell surface expression of amiloride-sensitive sodium channel (ENaC) subunits and by promoting their ubiquitination presumably involving NEDD4L. Promotes the localization of SCNN1D to recycling endosomes. Promotes CFTR cell surface expression through regulation of its ubiquitination. Down-regulates SOD1 activity by interfering with its homodimerization. Plays a role in copper ion homeostasis. Involved in copper-dependent ATP7A trafficking between the trans-Golgi network and vesicles in the cell periphery; the function is proposed to depend on its association within the CCC complex and cooperation with the WASH complex on early endosomes. Can bind one copper ion per monomer. May function to facilitate biliary copper excretion within hepatocytes. Binds to phosphatidylinositol 4,5-bisphosphate (PtdIns(4,5)P2). Involved in the regulation of HIF1A-mediated transcription; competes with ARNT/Hif-1-beta for binding to HIF1A resulting in decreased DNA binding and impaired transcriptional activation by HIF-1. Negatively regulates neuroblastoma G1/S phase cell cycle progression and cell proliferation by stimulating ubiquitination of NF-kappa-B subunit RELA and NF-kappa-B degradation in a FAM107A- and actin-dependent manner. This is COMM domain-containing protein 1 (Commd1) from Mus musculus (Mouse).